Consider the following 404-residue polypeptide: Cysteine desulfurase IscS (404 aa).

Residues 75-76, Asn155, Gln183, and 203-205 each bind pyridoxal 5'-phosphate; these read AT and SAH. Lys206 carries the post-translational modification N6-(pyridoxal phosphate)lysine. Thr243 contributes to the pyridoxal 5'-phosphate binding site. Cys328 acts as the Cysteine persulfide intermediate in catalysis. Cys328 lines the [2Fe-2S] cluster pocket.

This sequence belongs to the class-V pyridoxal-phosphate-dependent aminotransferase family. NifS/IscS subfamily. As to quaternary structure, homodimer. Forms a heterotetramer with IscU, interacts with other sulfur acceptors. Requires pyridoxal 5'-phosphate as cofactor.

Its subcellular location is the cytoplasm. It carries out the reaction (sulfur carrier)-H + L-cysteine = (sulfur carrier)-SH + L-alanine. It functions in the pathway cofactor biosynthesis; iron-sulfur cluster biosynthesis. Master enzyme that delivers sulfur to a number of partners involved in Fe-S cluster assembly, tRNA modification or cofactor biosynthesis. Catalyzes the removal of elemental sulfur atoms from cysteine to produce alanine. Functions as a sulfur delivery protein for Fe-S cluster synthesis onto IscU, an Fe-S scaffold assembly protein, as well as other S acceptor proteins. The protein is Cysteine desulfurase IscS of Shewanella sediminis (strain HAW-EB3).